A 108-amino-acid chain; its full sequence is Protein S100-A15A (108 aa).

The EF-hand domain occupies 53–88 (KEPYYVTELFQATDKNRDNQICFDEFLYILGKLVKD). Positions 66, 68, 70, 72, and 77 each coordinate Ca(2+).

This sequence belongs to the S-100 family.

The sequence is that of Protein S100-A15A (S100A15A) from Gorilla gorilla gorilla (Western lowland gorilla).